Here is a 658-residue protein sequence, read N- to C-terminus: Probable CoA ligase CCL6 (658 aa).

ATP-binding positions include 226 to 234 (TSGATGEPK), 411 to 416 (QGYGLT), D497, 509 to 512 (IIDR), and K632. Positions 298–411 (DIRFLMDDLQ…RVTSCAALSQ (114 aa)) are SBD1. An SBD2 region spans residues 412–477 (GYGLTESCGG…LRGTTLFSGY (66 aa)).

It belongs to the ATP-dependent AMP-binding enzyme family. As to expression, mostly expressed in glandular trichomes (lupulin glands) after flowering, and, to a lower extent, in stems, leaves, cones and flowers.

It is found in the cytoplasm. It localises to the cytosol. The protein is Probable CoA ligase CCL6 of Humulus lupulus (European hop).